A 342-amino-acid polypeptide reads, in one-letter code: Serine/threonine-protein kinase SAPK1 (342 aa).

The 257-residue stretch at 4–260 (YEVMRDIGSG…IPEIKNHPWF (257 aa)) folds into the Protein kinase domain. ATP-binding positions include 10–18 (IGSGNFGVA) and lysine 33. The active-site Proton acceptor is the aspartate 123. The tract at residues 253 to 342 (EIKNHPWFLK…ENSGDFVCAL (90 aa)) is C-terminal.

This sequence belongs to the protein kinase superfamily. Ser/Thr protein kinase family. In terms of processing, phosphorylated. As to expression, expressed in leaf blades, leaf sheaths and roots. Expressed in shoots and roots of young seedlings.

The enzyme catalyses L-seryl-[protein] + ATP = O-phospho-L-seryl-[protein] + ADP + H(+). The catalysed reaction is L-threonyl-[protein] + ATP = O-phospho-L-threonyl-[protein] + ADP + H(+). Activated by phosphorylation in response to hyperosmotic stress within 5 minutes. May play a role in signal transduction of hyperosmotic response. The protein is Serine/threonine-protein kinase SAPK1 (SAPK1) of Oryza sativa subsp. japonica (Rice).